We begin with the raw amino-acid sequence, 126 residues long: Acidic phospholipase A2 3 (126 aa).

The propeptide occupies 1 to 7 (SNRPMPL). 7 disulfide bridges follow: cysteine 18-cysteine 78, cysteine 33-cysteine 125, cysteine 35-cysteine 51, cysteine 50-cysteine 106, cysteine 57-cysteine 99, cysteine 67-cysteine 92, and cysteine 85-cysteine 97. Ca(2+) contacts are provided by tyrosine 34, glycine 36, and glycine 38. Histidine 54 is an active-site residue. Aspartate 55 serves as a coordination point for Ca(2+). Residue aspartate 100 is part of the active site.

This sequence belongs to the phospholipase A2 family. Group I subfamily. D49 sub-subfamily. The cofactor is Ca(2+). Expressed by the venom gland.

Its subcellular location is the secreted. The enzyme catalyses a 1,2-diacyl-sn-glycero-3-phosphocholine + H2O = a 1-acyl-sn-glycero-3-phosphocholine + a fatty acid + H(+). PLA2 catalyzes the calcium-dependent hydrolysis of the 2-acyl groups in 3-sn-phosphoglycerides. In Naja sagittifera (Andaman cobra), this protein is Acidic phospholipase A2 3.